A 156-amino-acid polypeptide reads, in one-letter code: Small ribosomal subunit protein uS7 (156 aa).

Belongs to the universal ribosomal protein uS7 family. In terms of assembly, part of the 30S ribosomal subunit. Contacts proteins S9 and S11.

Functionally, one of the primary rRNA binding proteins, it binds directly to 16S rRNA where it nucleates assembly of the head domain of the 30S subunit. Is located at the subunit interface close to the decoding center, probably blocks exit of the E-site tRNA. This is Small ribosomal subunit protein uS7 from Shewanella sediminis (strain HAW-EB3).